The following is a 486-amino-acid chain: B-type cell cycle switch protein ccs52B (486 aa).

Positions 24 to 36 match the PEST motif motif; that stretch reads RLETLSTPPSSAS. The segment covering 27–36 has biased composition (polar residues); it reads TLSTPPSSAS. The interval 27–57 is disordered; it reads TLSTPPSSASPRAISNLSSTPSPSKSSKCSD. Over residues 41 to 53 the composition is skewed to low complexity; sequence SNLSSTPSPSKSS. A C-box motif is present at residues 57–63; sequence DRFIPCR. Residues 87-98 carry the CSM motif motif; the sequence is AYNRLLKSELFG. WD repeat units lie at residues 177 to 214, 218 to 257, 260 to 297, 301 to 340, 343 to 385, 387 to 428, and 431 to 470; these read QDDF…VTKL, GPYD…KVRT, GHQT…DFIG, GHKS…PTLR, EHTA…QLNS, DTGS…KVAT, and GHSM…KTPA.

This sequence belongs to the WD repeat CDC20/Fizzy family. In terms of tissue distribution, mostly expressed in shoot apices and, to a lower extent, in roots, especially in root tips, and in hypocotyls. Expressed in nodulation-competent root zone but not in the nodules.

It participates in protein modification; protein ubiquitination. Its function is as follows. Component of the anaphase promoting complex/cyclosome (APC/C), a cell cycle-regulated E3 ubiquitin-protein ligase complex that controls progression through mitosis and the G1 phase of the cell cycle. The protein is B-type cell cycle switch protein ccs52B of Medicago truncatula (Barrel medic).